The chain runs to 434 residues: D-amino acid dehydrogenase (434 aa).

Residue 3–17 (VLVLGSGVIGTASAY) participates in FAD binding.

Belongs to the DadA oxidoreductase family. The cofactor is FAD.

It carries out the reaction a D-alpha-amino acid + A + H2O = a 2-oxocarboxylate + AH2 + NH4(+). The protein operates within amino-acid degradation; D-alanine degradation; NH(3) and pyruvate from D-alanine: step 1/1. Functionally, oxidative deamination of D-amino acids. The polypeptide is D-amino acid dehydrogenase (Pseudomonas putida (strain GB-1)).